The chain runs to 822 residues: Phenylalanine--tRNA ligase beta subunit (822 aa).

Residues 44–162 (LSKNTNLVVG…DQIALGSNAL (119 aa)) form the tRNA-binding domain. The segment at 201–224 (QSSNNNQETKSTNYKTKNSEDQTN) is disordered. The region spanning 430 to 513 (RTNPTISLNL…RLYGCHKLPP (84 aa)) is the B5 domain. Mg(2+)-binding residues include Asp491, Asp497, and Asp501. The region spanning 730–822 (PKFPTVIRDL…LIKHFHIEIR (93 aa)) is the FDX-ACB domain.

Belongs to the phenylalanyl-tRNA synthetase beta subunit family. Type 1 subfamily. Tetramer of two alpha and two beta subunits. It depends on Mg(2+) as a cofactor.

It localises to the cytoplasm. It carries out the reaction tRNA(Phe) + L-phenylalanine + ATP = L-phenylalanyl-tRNA(Phe) + AMP + diphosphate + H(+). This Onion yellows phytoplasma (strain OY-M) protein is Phenylalanine--tRNA ligase beta subunit.